The chain runs to 727 residues: Long-chain-fatty-acid--[acyl-carrier-protein] ligase AEE15, chloroplastic (727 aa).

The transit peptide at Met1–Cys66 directs the protein to the chloroplast.

It belongs to the ATP-dependent AMP-binding enzyme family.

Its subcellular location is the plastid. It is found in the chloroplast. It catalyses the reaction a long-chain fatty acid + holo-[ACP] + ATP = a long-chain fatty acyl-[ACP] + AMP + diphosphate. Its function is as follows. Probably involved in the activation of fatty acids to acyl-carrier-protein prior to fatty acid elongation in plastids. Acts on medium- to long-chain fatty acids. The polypeptide is Long-chain-fatty-acid--[acyl-carrier-protein] ligase AEE15, chloroplastic (AAE15) (Arabidopsis thaliana (Mouse-ear cress)).